Reading from the N-terminus, the 229-residue chain is AA9 family lytic polysaccharide monooxygenase E (229 aa).

The signal sequence occupies residues 1 to 19 (MRSSDITFVLLSVVATVRS). His-20 provides a ligand contact to Cu(2+). Residues Cys-57 and Cys-178 are joined by a disulfide bond. Asn-76 carries an N-linked (GlcNAc...) asparagine glycan. Residue His-99 coordinates Cu(2+). Residues His-164 and Gln-173 each contribute to the O2 site. Residue Tyr-175 coordinates Cu(2+). The N-linked (GlcNAc...) asparagine glycan is linked to Asn-217.

The protein belongs to the polysaccharide monooxygenase AA9 family. It depends on Cu(2+) as a cofactor.

Its subcellular location is the secreted. It catalyses the reaction [(1-&gt;4)-beta-D-glucosyl]n+m + reduced acceptor + O2 = 4-dehydro-beta-D-glucosyl-[(1-&gt;4)-beta-D-glucosyl]n-1 + [(1-&gt;4)-beta-D-glucosyl]m + acceptor + H2O.. Its function is as follows. Lytic polysaccharide monooxygenase (LPMO) that depolymerizes crystalline and amorphous polysaccharides via the oxidation of scissile alpha- or beta-(1-4)-glycosidic bonds, yielding C1 and C4 oxidation products. Catalysis by LPMOs requires the reduction of the active-site copper from Cu(II) to Cu(I) by a reducing agent and H(2)O(2) or O(2) as a cosubstrate. The sequence is that of AA9 family lytic polysaccharide monooxygenase E from Botryotinia fuckeliana (strain B05.10) (Noble rot fungus).